Here is a 301-residue protein sequence, read N- to C-terminus: Probable alpha-L-glutamate ligase 2 (301 aa).

One can recognise an ATP-grasp domain in the interval 104–287 (MQLLSRKGIG…VASMIIEFIV (184 aa)). Residues lysine 141, 178-179 (EY), aspartate 187, and 211-213 (RSN) each bind ATP. Positions 248, 260, and 262 each coordinate Mg(2+). Residues aspartate 248, glutamate 260, and asparagine 262 each coordinate Mn(2+).

It belongs to the RimK family. Mg(2+) is required as a cofactor. Mn(2+) serves as cofactor.

The polypeptide is Probable alpha-L-glutamate ligase 2 (Pseudoalteromonas atlantica (strain T6c / ATCC BAA-1087)).